Consider the following 296-residue polypeptide: MPELPEVETVRRGLAPAMVGARFARVTLRRPNLRFPFPERFAERLEGTTVRELARRAKYLTAHLDSGESLILHLGMSGRFDVRMPDGSNLSPGDFYLEGALGTPKHDHVVMAFANGATVTYNDARRFGFMDLVATRDLETCRHFAAMGVEPLSDALDGAVLARLFARKITPLKAALLDQRLIAGLGNIYVCEALHRSGLHPALPAGALAKPDGAPTPKAKKLVKEIKAVLTEAVAAGGSTLRDYARPDGERGAFQHGFRVYDRVGHACPTKGCTGRIGRIVQGGRSTFFCETCQVR.

P2 functions as the Schiff-base intermediate with DNA in the catalytic mechanism. Catalysis depends on E3, which acts as the Proton donor. Catalysis depends on K58, which acts as the Proton donor; for beta-elimination activity. DNA contacts are provided by H106, R125, and K168. The segment at 259 to 295 (RVYDRVGHACPTKGCTGRIGRIVQGGRSTFFCETCQV) adopts an FPG-type zinc-finger fold. The Proton donor; for delta-elimination activity role is filled by R285.

Belongs to the FPG family. Monomer. Zn(2+) serves as cofactor.

It catalyses the reaction Hydrolysis of DNA containing ring-opened 7-methylguanine residues, releasing 2,6-diamino-4-hydroxy-5-(N-methyl)formamidopyrimidine.. It carries out the reaction 2'-deoxyribonucleotide-(2'-deoxyribose 5'-phosphate)-2'-deoxyribonucleotide-DNA = a 3'-end 2'-deoxyribonucleotide-(2,3-dehydro-2,3-deoxyribose 5'-phosphate)-DNA + a 5'-end 5'-phospho-2'-deoxyribonucleoside-DNA + H(+). In terms of biological role, involved in base excision repair of DNA damaged by oxidation or by mutagenic agents. Acts as a DNA glycosylase that recognizes and removes damaged bases. Has a preference for oxidized purines, such as 7,8-dihydro-8-oxoguanine (8-oxoG). Has AP (apurinic/apyrimidinic) lyase activity and introduces nicks in the DNA strand. Cleaves the DNA backbone by beta-delta elimination to generate a single-strand break at the site of the removed base with both 3'- and 5'-phosphates. The polypeptide is Formamidopyrimidine-DNA glycosylase (Methylorubrum populi (strain ATCC BAA-705 / NCIMB 13946 / BJ001) (Methylobacterium populi)).